Consider the following 410-residue polypeptide: Heat stress transcription factor A-9 (410 aa).

The interval Met1–Lys44 is disordered. A compositionally biased stretch (gly residues) spans Val20–Gly33. Residues Gly171–Arg246 adopt a coiled-coil conformation. The interval Leu179–Val229 is hydrophobic repeat HR-A/B. Residues Ser256–Arg260 carry the Nuclear localization signal motif. The short motif at Ala279 to Glu290 is the Nuclear export signal element.

This sequence belongs to the HSF family. Class A subfamily. In terms of assembly, homotrimer. In terms of processing, exhibits temperature-dependent phosphorylation.

Its subcellular location is the cytoplasm. The protein resides in the nucleus. Functionally, transcriptional regulator that specifically binds DNA of heat shock promoter elements (HSE). This Oryza sativa subsp. japonica (Rice) protein is Heat stress transcription factor A-9 (HSFA9).